We begin with the raw amino-acid sequence, 430 residues long: Aspartate aminotransferase, mitochondrial (430 aa).

Residues 1-29 (MALLHSGRVLSGMAAAFHPGLAAAASARA) constitute a mitochondrion transit peptide. Thr48 carries the phosphothreonine modification. Lys59 bears the N6-acetyllysine mark. Gly65 is a binding site for substrate. Lys73 carries the post-translational modification N6-acetyllysine; alternate. Lys73 is subject to N6-succinyllysine; alternate. N6-acetyllysine is present on Lys82. Position 90 is an N6-acetyllysine; alternate (Lys90). Residue Lys90 is modified to N6-succinyllysine; alternate. Tyr96 carries the post-translational modification 3'-nitrotyrosine; alternate. Position 96 is a phosphotyrosine; alternate (Tyr96). N6-acetyllysine; alternate occurs at positions 107 and 122. An N6-succinyllysine; alternate mark is found at Lys107 and Lys122. Ser143 is modified (phosphoserine). Lys159 carries the post-translational modification N6-acetyllysine; alternate. N6-succinyllysine; alternate is present on Lys159. Trp162 is a substrate binding site. Lys185 carries the post-translational modification N6-acetyllysine; alternate. Lys185 carries the post-translational modification N6-succinyllysine; alternate. Asn215 is a binding site for substrate. Position 227 is an N6-succinyllysine (Lys227). Residue Lys234 is modified to N6-acetyllysine. An N6-acetyllysine; alternate mark is found at Lys279 and Lys296. An N6-(pyridoxal phosphate)lysine; alternate modification is found at Lys279. Residue Lys296 is modified to N6-succinyllysine; alternate. Residue Lys302 is modified to N6-acetyllysine. Lys309 carries the N6-acetyllysine; alternate modification. N6-succinyllysine; alternate is present on Lys309. Arg313 is subject to Asymmetric dimethylarginine. Lys338 is modified (N6-acetyllysine; alternate). Lys338 bears the N6-succinyllysine; alternate mark. Lys345 carries the post-translational modification N6-acetyllysine. Lys363 is subject to N6-acetyllysine; alternate. An N6-succinyllysine; alternate modification is found at Lys363. N6-acetyllysine is present on residues Lys364 and Lys387. An N6-acetyllysine; alternate mark is found at Lys396 and Lys404. N6-succinyllysine; alternate is present on residues Lys396 and Lys404. Arg407 contributes to the substrate binding site.

The protein belongs to the class-I pyridoxal-phosphate-dependent aminotransferase family. In terms of assembly, homodimer. Pyridoxal 5'-phosphate is required as a cofactor. Expressed in all tissues tested: liver, pancreas, kidney, heart, spleen, arterioles, and lymphocytes.

The protein resides in the mitochondrion matrix. Its subcellular location is the cell membrane. The enzyme catalyses L-aspartate + 2-oxoglutarate = oxaloacetate + L-glutamate. The catalysed reaction is L-kynurenine + 2-oxoglutarate = kynurenate + L-glutamate + H2O. In terms of biological role, catalyzes the irreversible transamination of the L-tryptophan metabolite L-kynurenine to form kynurenic acid (KA). As a member of the malate-aspartate shuttle, it has a key role in the intracellular NAD(H) redox balance. Is important for metabolite exchange between mitochondria and cytosol, and for amino acid metabolism. Facilitates cellular uptake of long-chain free fatty acids. This is Aspartate aminotransferase, mitochondrial (Got2) from Rattus norvegicus (Rat).